We begin with the raw amino-acid sequence, 69 residues long: Cytochrome c oxidase subunit 8A, mitochondrial (69 aa).

A mitochondrion-targeting transit peptide spans 1 to 25 (MSVLTPLLLRGLTGSARRLPVPRAK). The SIFI-degron motif lies at 2-19 (SVLTPLLLRGLTGSARRL). Over 26–36 (IHSLPPEGKLG) the chain is Mitochondrial matrix. Residues 37–60 (IMELAVGLTSCFVTFLLPAGWILS) form a helical membrane-spanning segment. Over 61–69 (HLETYRRPE) the chain is Mitochondrial intermembrane.

It belongs to the cytochrome c oxidase VIII family. Component of the cytochrome c oxidase (complex IV, CIV), a multisubunit enzyme composed of 14 subunits. The complex is composed of a catalytic core of 3 subunits MT-CO1, MT-CO2 and MT-CO3, encoded in the mitochondrial DNA, and 11 supernumerary subunits COX4I1 (or COX4I2), COX5A, COX5B, COX6A1 (or COX6A2), COX6B1 (or COX6B2), COX6C, COX7A2 (or COX7A1), COX7B, COX7C, COX8A and NDUFA4, which are encoded in the nuclear genome. The complex exists as a monomer or a dimer and forms supercomplexes (SCs) in the inner mitochondrial membrane with NADH-ubiquinone oxidoreductase (complex I, CI) and ubiquinol-cytochrome c oxidoreductase (cytochrome b-c1 complex, complex III, CIII), resulting in different assemblies (supercomplex SCI(1)III(2)IV(1) and megacomplex MCI(2)III(2)IV(2)). Post-translationally, in response to mitochondrial stress, the precursor protein is ubiquitinated by the SIFI complex in the cytoplasm before mitochondrial import, leading to its degradation. Within the SIFI complex, UBR4 initiates ubiquitin chain that are further elongated or branched by KCMF1. Widely expressed.

It is found in the mitochondrion inner membrane. It participates in energy metabolism; oxidative phosphorylation. Component of the cytochrome c oxidase, the last enzyme in the mitochondrial electron transport chain which drives oxidative phosphorylation. The respiratory chain contains 3 multisubunit complexes succinate dehydrogenase (complex II, CII), ubiquinol-cytochrome c oxidoreductase (cytochrome b-c1 complex, complex III, CIII) and cytochrome c oxidase (complex IV, CIV), that cooperate to transfer electrons derived from NADH and succinate to molecular oxygen, creating an electrochemical gradient over the inner membrane that drives transmembrane transport and the ATP synthase. Cytochrome c oxidase is the component of the respiratory chain that catalyzes the reduction of oxygen to water. Electrons originating from reduced cytochrome c in the intermembrane space (IMS) are transferred via the dinuclear copper A center (CU(A)) of subunit 2 and heme A of subunit 1 to the active site in subunit 1, a binuclear center (BNC) formed by heme A3 and copper B (CU(B)). The BNC reduces molecular oxygen to 2 water molecules using 4 electrons from cytochrome c in the IMS and 4 protons from the mitochondrial matrix. The protein is Cytochrome c oxidase subunit 8A, mitochondrial (COX8A) of Homo sapiens (Human).